Consider the following 239-residue polypeptide: Phosphoribosylaminoimidazole-succinocarboxamide synthase (239 aa).

The protein belongs to the SAICAR synthetase family.

It catalyses the reaction 5-amino-1-(5-phospho-D-ribosyl)imidazole-4-carboxylate + L-aspartate + ATP = (2S)-2-[5-amino-1-(5-phospho-beta-D-ribosyl)imidazole-4-carboxamido]succinate + ADP + phosphate + 2 H(+). Its pathway is purine metabolism; IMP biosynthesis via de novo pathway; 5-amino-1-(5-phospho-D-ribosyl)imidazole-4-carboxamide from 5-amino-1-(5-phospho-D-ribosyl)imidazole-4-carboxylate: step 1/2. This is Phosphoribosylaminoimidazole-succinocarboxamide synthase from Bacillus cereus (strain G9842).